Here is a 452-residue protein sequence, read N- to C-terminus: Pup--protein ligase (452 aa).

Glutamate 9 is a Mg(2+) binding site. Arginine 53 lines the ATP pocket. Tyrosine 55 serves as a coordination point for Mg(2+). The Proton acceptor role is filled by aspartate 57. Mg(2+) is bound at residue glutamate 63. Residues threonine 66 and tryptophan 419 each contribute to the ATP site.

It belongs to the Pup ligase/Pup deamidase family. Pup-conjugating enzyme subfamily.

The catalysed reaction is ATP + [prokaryotic ubiquitin-like protein]-L-glutamate + [protein]-L-lysine = ADP + phosphate + N(6)-([prokaryotic ubiquitin-like protein]-gamma-L-glutamyl)-[protein]-L-lysine.. It functions in the pathway protein degradation; proteasomal Pup-dependent pathway. The protein operates within protein modification; protein pupylation. In terms of biological role, catalyzes the covalent attachment of the prokaryotic ubiquitin-like protein modifier Pup to the proteasomal substrate proteins, thereby targeting them for proteasomal degradation. This tagging system is termed pupylation. The ligation reaction involves the side-chain carboxylate of the C-terminal glutamate of Pup and the side-chain amino group of a substrate lysine. The polypeptide is Pup--protein ligase (Rhodococcus jostii (strain RHA1)).